The primary structure comprises 185 residues: Ribosome-recycling factor (185 aa).

The protein belongs to the RRF family.

Its subcellular location is the cytoplasm. In terms of biological role, responsible for the release of ribosomes from messenger RNA at the termination of protein biosynthesis. May increase the efficiency of translation by recycling ribosomes from one round of translation to another. The sequence is that of Ribosome-recycling factor from Shewanella amazonensis (strain ATCC BAA-1098 / SB2B).